The primary structure comprises 371 residues: MPHHYVLTLFGLLPVATNISTWWNFGSMLLTCLALQVLTGFFLAVHYTANINLAFSSIVHITRDVPYGWMMQNLHAIGASMFFICIYIHIARGLYYGSYLNKETWMSGITLLITLMATAFFGYVLPWGQMSFWAATVITNLLTAVPYLGTSLTTWLWGGFAINDPTLTRFFALHFILPFAIISLSSLHVILLHEEGSSNPLGTNPDIDKIPFHPYHSHKDLLLLTLMMMFLFIIVSFFPDIFNDPDNFSKANPLVTPQHIKPEWYFLFAYGILRSIPNKLGGALALVMSIMILFCTPFTHTAHLRPMTFRPLSQLMFWTLVSTFITITWAATKPVEPPFITISQVTSILYFTFFLSIPILGWVENKIMNAP.

4 helical membrane passes run 25-45 (FGSM…FLAV), 69-90 (WMMQ…YIHI), 105-125 (WMSG…GYVL), and 170-190 (FFAL…LHVI). 2 residues coordinate heme b: His-75 and His-89. Heme b-binding residues include His-174 and His-188. An a ubiquinone-binding site is contributed by His-193. Helical transmembrane passes span 218–238 (HKDL…VSFF), 280–300 (LGGA…PFTH), 312–332 (LSQL…WAAT), and 339–358 (FITI…LSIP).

This sequence belongs to the cytochrome b family. The cytochrome bc1 complex contains 3 respiratory subunits (MT-CYB, CYC1 and UQCRFS1), 2 core proteins (UQCRC1 and UQCRC2) and probably 6 low-molecular weight proteins. Heme b is required as a cofactor.

The protein resides in the mitochondrion inner membrane. Component of the ubiquinol-cytochrome c reductase complex (complex III or cytochrome b-c1 complex) that is part of the mitochondrial respiratory chain. The b-c1 complex mediates electron transfer from ubiquinol to cytochrome c. Contributes to the generation of a proton gradient across the mitochondrial membrane that is then used for ATP synthesis. This Liasis mackloti savuensis (Savu python) protein is Cytochrome b (MT-CYB).